A 107-amino-acid chain; its full sequence is L-rhamnose mutarotase (107 aa).

Tyr-21 contributes to the substrate binding site. The Proton donor role is filled by His-25. Residues Tyr-44 and 79-80 (WW) each bind substrate.

The protein belongs to the rhamnose mutarotase family. As to quaternary structure, homodimer.

It localises to the cytoplasm. The catalysed reaction is alpha-L-rhamnose = beta-L-rhamnose. The protein operates within carbohydrate metabolism; L-rhamnose metabolism. In terms of biological role, involved in the anomeric conversion of L-rhamnose. The polypeptide is L-rhamnose mutarotase (Agrobacterium fabrum (strain C58 / ATCC 33970) (Agrobacterium tumefaciens (strain C58))).